We begin with the raw amino-acid sequence, 644 residues long: Probable lysophospholipase 2 (644 aa).

Positions 1-19 (MYFQSFYFLALLLATAVYG) are cleaved as a signal peptide. Asn44, Asn96, Asn141, Asn178, Asn221, Asn245, Asn253, Asn281, Asn286, Asn316, Asn319, Asn373, Asn393, Asn449, Asn501, Asn558, Asn579, and Asn596 each carry an N-linked (GlcNAc...) asparagine glycan. The PLA2c domain maps to 53–600 (SCDSSEIMVN…SQYCWNGTVD (548 aa)).

This sequence belongs to the lysophospholipase family.

Its subcellular location is the secreted. It carries out the reaction a 1-acyl-sn-glycero-3-phosphocholine + H2O = sn-glycerol 3-phosphocholine + a fatty acid + H(+). Catalyzes the release of fatty acids from lysophospholipids. The chain is Probable lysophospholipase 2 (plb2) from Schizosaccharomyces pombe (strain 972 / ATCC 24843) (Fission yeast).